The chain runs to 426 residues: Serine/threonine-protein kinase ssn3 (426 aa).

The 328-residue stretch at 41 to 368 folds into the Protein kinase domain; it reads YHIVGFISSG…AREALEHPYF (328 aa). ATP-binding positions include 47–55 and lysine 71; that span reads ISSGTYGRV. The active-site Proton acceptor is aspartate 173. Positions 390–426 are disordered; it reads RVTQDDNDIRSGSLPGTKRSGLPDDSLMGRAAKRLKE.

It belongs to the protein kinase superfamily. CMGC Ser/Thr protein kinase family. CDC2/CDKX subfamily. Component of the srb8-11 complex, a regulatory module of the Mediator complex. It depends on Mg(2+) as a cofactor.

It is found in the nucleus. The catalysed reaction is L-seryl-[protein] + ATP = O-phospho-L-seryl-[protein] + ADP + H(+). It carries out the reaction L-threonyl-[protein] + ATP = O-phospho-L-threonyl-[protein] + ADP + H(+). The enzyme catalyses [DNA-directed RNA polymerase] + ATP = phospho-[DNA-directed RNA polymerase] + ADP + H(+). Its function is as follows. Component of the srb8-11 complex. The srb8-11 complex is a regulatory module of the Mediator complex which is itself dependent transcription. The srb8-11 complex may be involved in the transcriptional repression of a subset of genes regulated by Mediator. It may inhibit the association of the Mediator complex with RNA polymerase II to form the holoenzyme complex. The srb8-11 complex phosphorylates the C-terminal domain (CTD) of the largest subunit of RNA polymerase II. This chain is Serine/threonine-protein kinase ssn3 (ssn3), found in Neosartorya fischeri (strain ATCC 1020 / DSM 3700 / CBS 544.65 / FGSC A1164 / JCM 1740 / NRRL 181 / WB 181) (Aspergillus fischerianus).